Reading from the N-terminus, the 82-residue chain is Three-finger toxin MALT0063C (82 aa).

A signal peptide spans 1–21 (MRTLLLTLVVVTIVCLDLGNS). Cystine bridges form between C24-C42, C35-C60, C64-C72, and C73-C78.

This sequence belongs to the three-finger toxin family. Short-chain subfamily. In terms of tissue distribution, expressed by the venom gland.

Its subcellular location is the secreted. In Micrurus altirostris (Uruguayan coral snake), this protein is Three-finger toxin MALT0063C.